Reading from the N-terminus, the 349-residue chain is DNA polymerase IV (349 aa).

The UmuC domain occupies 3-187; the sequence is VLFVDFDYFF…LDISKVPGVG (185 aa). Mg(2+) is bound by residues Asp-7 and Asp-105. Residue Glu-106 is part of the active site.

It belongs to the DNA polymerase type-Y family. Monomer. Mg(2+) serves as cofactor.

It is found in the cytoplasm. It carries out the reaction DNA(n) + a 2'-deoxyribonucleoside 5'-triphosphate = DNA(n+1) + diphosphate. Poorly processive, error-prone DNA polymerase involved in untargeted mutagenesis. Copies undamaged DNA at stalled replication forks, which arise in vivo from mismatched or misaligned primer ends. These misaligned primers can be extended by PolIV. Exhibits no 3'-5' exonuclease (proofreading) activity. May be involved in translesional synthesis. This chain is DNA polymerase IV, found in Metallosphaera sedula (strain ATCC 51363 / DSM 5348 / JCM 9185 / NBRC 15509 / TH2).